The sequence spans 607 residues: MILLTFSTGRRLDFVHHSGVFFLQTLLWILCATVCGTEQYFNVEVWLQKYGYLPPTDPRMSVLRSAETMQSALAAMQQFYGINMTGKVDRNTIDWMKKPRCGVPDQTRGSSKFHIRRKRYALTGQKWQHKHITYSIKNVTPKVGDPETRKAIRRAFDVWQNVTPLTFEEVPYSELENGKRDVDITIIFASGFHGDSSPFDGEGGFLAHAYFPGPGIGGDTHFDSDEPWTLGNPNHDGNDLFLVAVHELGHALGLEHSNDPTAIMAPFYQYMETDNFKLPNDDLQGIQKIYGPPDKIPPPTRPLPTVPPHRSIPPADPRKNDRPKPPRPPTGRPSYPGAKPNICDGNFNTLAILRREMFVFKDQWFWRVRNNRVMDGYPMQITYFWRGLPPSIDAVYENSDGNFVFFKGNKYWVFKDTTLQPGYPHDLITLGSGIPPHGIDSAIWWEDVGKTYFFKGDRYWRYSEEMKTMDPGYPKPITVWKGIPESPQGAFVHKENGFTYFYKGKEYWKFNNQILKVEPGYPRSILKDFMGCDGPTDRVKEGHSPPDDVDIVIKLDNTASTVKAIAIVIPCILALCLLVLVYTVFQFKRKGTPRHILYCKRSMQEWV.

The N-terminal stretch at 1 to 31 is a signal peptide; it reads MILLTFSTGRRLDFVHHSGVFFLQTLLWILC. Positions 32-119 are excised as a propeptide; that stretch reads ATVCGTEQYF…SSKFHIRRKR (88 aa). The N-linked (GlcNAc...) asparagine glycan is linked to N83. Positions 99–106 match the Cysteine switch motif; that stretch reads PRCGVPDQ. C101 is a Zn(2+) binding site. Residues 120-564 lie on the Extracellular side of the membrane; sequence YALTGQKWQH…LDNTASTVKA (445 aa). D183 provides a ligand contact to Ca(2+). Residues H193 and D195 each contribute to the Zn(2+) site. Ca(2+) is bound by residues D200, G201, G203, and F205. H208 provides a ligand contact to Zn(2+). Residues G215, G217, and D219 each contribute to the Ca(2+) site. H221 contacts Zn(2+). Residues D223 and E226 each contribute to the Ca(2+) site. Residue H246 coordinates Zn(2+). E247 is a catalytic residue. Residues H250 and H256 each contribute to the Zn(2+) site. The interval 281–340 is disordered; that stretch reads DDLQGIQKIYGPPDKIPPPTRPLPTVPPHRSIPPADPRKNDRPKPPRPPTGRPSYPGAKP. Over residues 294 to 315 the composition is skewed to pro residues; sequence DKIPPPTRPLPTVPPHRSIPPA. 4 Hemopexin repeats span residues 340–388, 389–434, 436–484, and 485–532; these read PNIC…WRGL, PPSI…GSGI, PHGI…KGIP, and ESPQ…FMGC. The cysteines at positions 343 and 532 are disulfide-linked. The helical transmembrane segment at 565-585 threads the bilayer; the sequence is IAIVIPCILALCLLVLVYTVF. Topologically, residues 586–607 are cytoplasmic; sequence QFKRKGTPRHILYCKRSMQEWV.

The protein belongs to the peptidase M10A family. As to quaternary structure, interacts with CSPG4 through CSPG4 chondroitin sulfate glycosaminoglycan. Zn(2+) is required as a cofactor. Ca(2+) serves as cofactor. The precursor is cleaved by a furin endopeptidase. As to expression, expressed in heart, brain, placenta, ovary and small intestine. Isoform Short is found in the ovary.

Its subcellular location is the cell membrane. The protein localises to the secreted. It is found in the extracellular space. The protein resides in the extracellular matrix. It localises to the cell surface. Its activity is regulated as follows. TIMP-2 shows little inhibitory activity compared to TIMP-1. TIMP-1 seems to have less binding affinity than TIMP-2 for the short isoform. Endopeptidase that degrades various components of the extracellular matrix, such as collagen type III and fibronectin. Activates progelatinase A. Involved in the matrix remodeling of blood vessels. Isoform short cleaves fibronectin and also collagen type III, but at lower rate. It has no effect on type I, II, IV and V collagen. However, upon interaction with CSPG4, it may be involved in degradation and invasion of type I collagen by melanoma cells. The polypeptide is Matrix metalloproteinase-16 (Homo sapiens (Human)).